The chain runs to 132 residues: Precursor of CEP10 (132 aa).

The signal sequence occupies residues 1-19 (MKLFIIIVVTSLTISKVFD). Residues 20–66 (KTLVTIEARNLRKMDRHEHFNANEDFVEAKMLKKIDNKNNLNNRCIN) constitute a propeptide that is removed on maturation. Residues Pro-70 and Pro-73 each carry the hydroxyproline modification. Positions 82-91 (PKVINNKFTK) are excised as a propeptide. Residues Pro-95, Pro-98, and Pro-102 each carry the hydroxyproline modification. The propeptide occupies 107–116 (LRVVNNKFTN). A hydroxyproline mark is found at Pro-120, Pro-123, and Pro-127. Pro-132 is a propeptide.

This sequence belongs to the C-terminally encoded plant signaling peptide (CEP) family. Interacts with CEP receptors (e.g. CEPR1 and CEPR2). Post-translationally, the mature small signaling peptide is generated by proteolytic processing of the longer precursor.

Its subcellular location is the secreted. It is found in the extracellular space. It localises to the apoplast. Its function is as follows. Extracellular signaling peptide that may regulate primary root growth rate and systemic nitrogen (N)-demand signaling. This Arabidopsis thaliana (Mouse-ear cress) protein is Precursor of CEP10.